Consider the following 160-residue polypeptide: Protransforming growth factor alpha (160 aa).

Positions 1 to 23 (MVPSAGQLALFALGIVLAACQAL) are cleaved as a signal peptide. A propeptide spans 24–39 (ENSTSPLSADPPVAAA) (removed in mature form). Residues 24 to 98 (ENSTSPLSAD…AVVAASQKKQ (75 aa)) are Extracellular-facing. A glycan (N-linked (GlcNAc...) asparagine) is linked at asparagine 25. Positions 43–83 (HFNDCPDSHTQFCFHGTCRFLVQEDKPACVCHSGYVGARCE) constitute an EGF-like domain. 3 disulfide bridges follow: cysteine 47–cysteine 60, cysteine 55–cysteine 71, and cysteine 73–cysteine 82. Positions 90–160 (VVAASQKKQA…TACCHSETVV (71 aa)) are cleaved as a propeptide — removed in mature form. The helical transmembrane segment at 99-124 (AITALVVVSIVALAVLIITCVLIHCC) threads the bilayer. Topologically, residues 125 to 160 (QVRKHCEWCRALICRHEKPSALLKGRTACCHSETVV) are cytoplasmic. S-palmitoyl cysteine attachment occurs at residues cysteine 153 and cysteine 154.

Interacts with the PDZ domains of MAGI3, SDCBP and SNTA1. The interaction with SDCBP, is required for the targeting to the cell surface. In the endoplasmic reticulum, in its immature form (i.e. with a prosegment and lacking full N-glycosylation), interacts with CNIH. In the Golgi apparatus, may form a complex with CNIH and GORASP2. Interacts (via cytoplasmic C-terminal domain) with NKD2. Isoform 1, isoform 3 and isoform 4 are expressed in keratinocytes and tumor-derived cell lines.

Its subcellular location is the secreted. It is found in the extracellular space. The protein localises to the cell membrane. In terms of biological role, TGF alpha is a mitogenic polypeptide that is able to bind to the EGF receptor/EGFR and to act synergistically with TGF beta to promote anchorage-independent cell proliferation in soft agar. This Homo sapiens (Human) protein is Protransforming growth factor alpha (TGFA).